Reading from the N-terminus, the 347-residue chain is Phosphate acyltransferase (347 aa).

This sequence belongs to the PlsX family. In terms of assembly, homodimer. Probably interacts with PlsY.

The protein resides in the cytoplasm. The catalysed reaction is a fatty acyl-[ACP] + phosphate = an acyl phosphate + holo-[ACP]. Its pathway is lipid metabolism; phospholipid metabolism. Functionally, catalyzes the reversible formation of acyl-phosphate (acyl-PO(4)) from acyl-[acyl-carrier-protein] (acyl-ACP). This enzyme utilizes acyl-ACP as fatty acyl donor, but not acyl-CoA. The polypeptide is Phosphate acyltransferase (Sinorhizobium medicae (strain WSM419) (Ensifer medicae)).